A 135-amino-acid chain; its full sequence is Ribosome-binding factor A (135 aa).

Residues 115-135 (VNEDKRKQQDSGREEDQAGEE) form a disordered region. The span at 116 to 135 (NEDKRKQQDSGREEDQAGEE) shows a compositional bias: basic and acidic residues.

It belongs to the RbfA family. Monomer. Binds 30S ribosomal subunits, but not 50S ribosomal subunits or 70S ribosomes.

It localises to the cytoplasm. In terms of biological role, one of several proteins that assist in the late maturation steps of the functional core of the 30S ribosomal subunit. Associates with free 30S ribosomal subunits (but not with 30S subunits that are part of 70S ribosomes or polysomes). Required for efficient processing of 16S rRNA. May interact with the 5'-terminal helix region of 16S rRNA. This chain is Ribosome-binding factor A, found in Vibrio campbellii (strain ATCC BAA-1116).